The primary structure comprises 165 residues: ATP synthase subunit b (165 aa).

Residues 7-27 traverse the membrane as a helical segment; that stretch reads STTIGDIIIVSGSVLLLFILI.

The protein belongs to the ATPase B chain family. As to quaternary structure, F-type ATPases have 2 components, F(1) - the catalytic core - and F(0) - the membrane proton channel. F(1) has five subunits: alpha(3), beta(3), gamma(1), delta(1), epsilon(1). F(0) has three main subunits: a(1), b(2) and c(10-14). The alpha and beta chains form an alternating ring which encloses part of the gamma chain. F(1) is attached to F(0) by a central stalk formed by the gamma and epsilon chains, while a peripheral stalk is formed by the delta and b chains.

Its subcellular location is the cell membrane. Its function is as follows. F(1)F(0) ATP synthase produces ATP from ADP in the presence of a proton or sodium gradient. F-type ATPases consist of two structural domains, F(1) containing the extramembraneous catalytic core and F(0) containing the membrane proton channel, linked together by a central stalk and a peripheral stalk. During catalysis, ATP synthesis in the catalytic domain of F(1) is coupled via a rotary mechanism of the central stalk subunits to proton translocation. In terms of biological role, component of the F(0) channel, it forms part of the peripheral stalk, linking F(1) to F(0). The polypeptide is ATP synthase subunit b (Streptococcus agalactiae serotype Ia (strain ATCC 27591 / A909 / CDC SS700)).